The primary structure comprises 47 residues: Capistruin (47 aa).

A propeptide spanning residues 1-28 (MVRLLAKLLRSTIHGSNGVSLDAVSSTH) is cleaved from the precursor. The segment at residues 29-37 (GTPGFQTPD) is a cross-link (isoaspartyl glycine isopeptide (Gly-Asp)).

Post-translationally, it is assumed that the two processing enzymes CapB/CapC convert the precursor protein CapA into the mature lasso peptide capistruin. CapB is assumed to cleave the precursor protein CapA and to set an N-terminal Gly free, whose a-NH2 group acts as the nucleophile in the subsequent cyclization reaction. CapC is most likely involved in the side-chain carboxyl group activation of aspartic acid at position 9 generating the electrophile for the condensation reaction. CapD may export capistruin outside of the producing cells.

It localises to the secreted. Its function is as follows. Peptide antibiotic that functions through inhibition of the bacterial DNA-dependent RNA polymerase (RNAP). Inhibits transcription by binding in RNAP secondary channel, where it sterically blocks the folding of the trigger loop, which is essential for efficient catalysis. In contrast to MccJ25, does not restrict access of nucleotide substrates to the catalytic center and shows a non-competitive mode of inhibition. Shows activity against closely related Gram-negative Burkholderia and Pseudomonas strains. Is not active against Gram-positive bacteria. The polypeptide is Capistruin (Burkholderia thailandensis (strain ATCC 700388 / DSM 13276 / CCUG 48851 / CIP 106301 / E264)).